The following is an 856-amino-acid chain: Rod cGMP-specific 3',5'-cyclic phosphodiesterase subunit beta (856 aa).

At Ser-2 the chain carries N-acetylserine. GAF domains follow at residues 71–220 (NMER…TLNL) and 252–429 (DIER…GWSV). In terms of domain architecture, PDEase spans 481–814 (EEDELGKILK…KEWKALADEY (334 aa)). His-557 acts as the Proton donor in catalysis. Residues His-561, His-597, Asp-598, and Asp-718 each coordinate a divalent metal cation. Residue Cys-853 is the site of S-geranylgeranyl cysteine attachment. The propeptide at 854–856 (CIL) is removed in mature form.

It belongs to the cyclic nucleotide phosphodiesterase family. As to quaternary structure, oligomer composed of two catalytic chains (alpha and beta), an inhibitory chain (gamma) and the delta chain. A divalent metal cation is required as a cofactor.

It is found in the membrane. The protein resides in the cell projection. The protein localises to the cilium. Its subcellular location is the photoreceptor outer segment. It catalyses the reaction 3',5'-cyclic GMP + H2O = GMP + H(+). Its function is as follows. Rod-specific cGMP phosphodiesterase that catalyzes the hydrolysis of 3',5'-cyclic GMP. Necessary for the formation of a functional phosphodiesterase holoenzyme. Involved in retinal circadian rhythm photoentrainment via modulation of UVA and orange light-induced phase-shift of the retina clock. May participate in processes of transmission and amplification of the visual signal. The protein is Rod cGMP-specific 3',5'-cyclic phosphodiesterase subunit beta of Mus musculus (Mouse).